Reading from the N-terminus, the 480-residue chain is DnaJ homolog subfamily A member 3, mitochondrial (480 aa).

An Omega-N-methylarginine; by CARM1 modification is found at arginine 58. Residues 93–158 (DYYQILGVPR…VKRKQYDAYG (66 aa)) enclose the J domain. Lysine 134 is modified (N6-acetyllysine). Residues 223–301 (GVNKEFTVNI…CRGAGQAKQK (79 aa)) form a CR-type zinc finger. Position 236 (cysteine 236) interacts with Zn(2+). CXXCXGXG motif repeat units follow at residues 236 to 243 (CERCDGKG), 253 to 260 (CHYCGGSG), 275 to 282 (CRRCGGRG), and 289 to 296 (CVVCRGAG). An Omega-N-methylarginine; by CARM1 modification is found at arginine 238. 7 residues coordinate Zn(2+): cysteine 239, cysteine 253, cysteine 256, cysteine 275, cysteine 278, cysteine 289, and cysteine 292. Arginine 293 bears the Omega-N-methylarginine; by CARM1 mark. Position 398 is a phosphoserine (serine 398). Residues 437 to 468 (TVNGVTHTSTGGRTMDSSAGSKDRREAGEDNE) are disordered. A compositionally biased stretch (polar residues) spans 439-456 (NGVTHTSTGGRTMDSSAG).

In terms of assembly, interacts with JAK2, HSPA9B and IFN-gammaR2 chain. Interacts with Ras GTPase-activating protein 1 (RASA1). Isoform 2 interacts with MUSK (via the cytoplasmic domain). Post-translationally, tyrosine phosphorylated.

It is found in the mitochondrion matrix. The protein resides in the cytoplasm. The protein localises to the cytosol. It localises to the postsynaptic cell membrane. Its function is as follows. Modulates apoptotic signal transduction or effector structures within the mitochondrial matrix. Affect cytochrome C release from the mitochondria and caspase 3 activation, but not caspase 8 activation. Isoform 1 increases apoptosis triggered by both TNF and the DNA-damaging agent mytomycin C; in sharp contrast, isoform 2 suppresses apoptosis. Can modulate IFN-gamma-mediated transcriptional activity. Isoform 2 may play a role in neuromuscular junction development as an effector of the MUSK signaling pathway. This Mus musculus (Mouse) protein is DnaJ homolog subfamily A member 3, mitochondrial (Dnaja3).